A 156-amino-acid chain; its full sequence is ATP synthase subunit b (156 aa).

A helical membrane pass occupies residues 11-31 (AIAFVLFVLFCMKYIWPPIMA).

Belongs to the ATPase B chain family. As to quaternary structure, F-type ATPases have 2 components, F(1) - the catalytic core - and F(0) - the membrane proton channel. F(1) has five subunits: alpha(3), beta(3), gamma(1), delta(1), epsilon(1). F(0) has three main subunits: a(1), b(2) and c(10-14). The alpha and beta chains form an alternating ring which encloses part of the gamma chain. F(1) is attached to F(0) by a central stalk formed by the gamma and epsilon chains, while a peripheral stalk is formed by the delta and b chains.

Its subcellular location is the cell inner membrane. Its function is as follows. F(1)F(0) ATP synthase produces ATP from ADP in the presence of a proton or sodium gradient. F-type ATPases consist of two structural domains, F(1) containing the extramembraneous catalytic core and F(0) containing the membrane proton channel, linked together by a central stalk and a peripheral stalk. During catalysis, ATP synthesis in the catalytic domain of F(1) is coupled via a rotary mechanism of the central stalk subunits to proton translocation. Functionally, component of the F(0) channel, it forms part of the peripheral stalk, linking F(1) to F(0). In Yersinia enterocolitica serotype O:8 / biotype 1B (strain NCTC 13174 / 8081), this protein is ATP synthase subunit b.